Here is a 153-residue protein sequence, read N- to C-terminus: Conglutin delta 2 (153 aa).

The N-terminal stretch at 1-22 (MAKLTILIALVAALVLVVHTSA) is a signal peptide. Intrachain disulfides connect C30–C102, C42–C90, C91–C138, and C104–C146.

This sequence belongs to the 2S seed storage albumins family. Heterodimer of a small chain and a large chain; disulfide-linked. Expressed in developing cotyledons (at protein level).

The protein resides in the endoplasmic reticulum. The chain is Conglutin delta 2 from Lupinus angustifolius (Narrow-leaved blue lupine).